Here is a 400-residue protein sequence, read N- to C-terminus: NADH-quinone oxidoreductase subunit D (400 aa).

This sequence belongs to the complex I 49 kDa subunit family. NDH-1 is composed of 14 different subunits. Subunits NuoB, C, D, E, F, and G constitute the peripheral sector of the complex.

It is found in the cell inner membrane. The enzyme catalyses a quinone + NADH + 5 H(+)(in) = a quinol + NAD(+) + 4 H(+)(out). NDH-1 shuttles electrons from NADH, via FMN and iron-sulfur (Fe-S) centers, to quinones in the respiratory chain. The immediate electron acceptor for the enzyme in this species is believed to be menaquinone. Couples the redox reaction to proton translocation (for every two electrons transferred, four hydrogen ions are translocated across the cytoplasmic membrane), and thus conserves the redox energy in a proton gradient. In Prosthecochloris aestuarii (strain DSM 271 / SK 413), this protein is NADH-quinone oxidoreductase subunit D.